Consider the following 112-residue polypeptide: UPF0342 protein SPT_0901 (112 aa).

The protein belongs to the UPF0342 family.

In Streptococcus pneumoniae (strain Taiwan19F-14), this protein is UPF0342 protein SPT_0901.